We begin with the raw amino-acid sequence, 498 residues long: ATP synthase subunit beta, chloroplastic (498 aa).

Position 172–179 (172–179 (GGAGVGKT)) interacts with ATP.

The protein belongs to the ATPase alpha/beta chains family. As to quaternary structure, F-type ATPases have 2 components, CF(1) - the catalytic core - and CF(0) - the membrane proton channel. CF(1) has five subunits: alpha(3), beta(3), gamma(1), delta(1), epsilon(1). CF(0) has four main subunits: a(1), b(1), b'(1) and c(9-12).

It is found in the plastid. The protein resides in the chloroplast thylakoid membrane. The enzyme catalyses ATP + H2O + 4 H(+)(in) = ADP + phosphate + 5 H(+)(out). In terms of biological role, produces ATP from ADP in the presence of a proton gradient across the membrane. The catalytic sites are hosted primarily by the beta subunits. In Hyophorbe lagenicaulis (Bottle palm), this protein is ATP synthase subunit beta, chloroplastic.